We begin with the raw amino-acid sequence, 383 residues long: Chaperone protein DnaJ (383 aa).

One can recognise a J domain in the interval 5–70 (DYYDVLGVSK…DKKAAYDRYG (66 aa)). The segment at 142–220 (GMQKTISVPG…CRGAGREEKT (79 aa)) adopts a CR-type zinc-finger fold. Positions 155, 158, 172, 175, 194, 197, 208, and 211 each coordinate Zn(2+). 4 CXXCXGXG motif repeats span residues 155-162 (CSACEGTG), 172-179 (CPTCSGMG), 194-201 (CPTCSGMG), and 208-215 (CQACRGAG).

Belongs to the DnaJ family. In terms of assembly, homodimer. Requires Zn(2+) as cofactor.

It localises to the cytoplasm. Its function is as follows. Participates actively in the response to hyperosmotic and heat shock by preventing the aggregation of stress-denatured proteins and by disaggregating proteins, also in an autonomous, DnaK-independent fashion. Unfolded proteins bind initially to DnaJ; upon interaction with the DnaJ-bound protein, DnaK hydrolyzes its bound ATP, resulting in the formation of a stable complex. GrpE releases ADP from DnaK; ATP binding to DnaK triggers the release of the substrate protein, thus completing the reaction cycle. Several rounds of ATP-dependent interactions between DnaJ, DnaK and GrpE are required for fully efficient folding. Also involved, together with DnaK and GrpE, in the DNA replication of plasmids through activation of initiation proteins. This Dinoroseobacter shibae (strain DSM 16493 / NCIMB 14021 / DFL 12) protein is Chaperone protein DnaJ.